A 254-amino-acid polypeptide reads, in one-letter code: Alcohol dehydrogenase (254 aa).

Phe-10–Leu-33 contributes to the NAD(+) binding site. Ser-138 contributes to the substrate binding site. Tyr-151 acts as the Proton acceptor in catalysis.

This sequence belongs to the short-chain dehydrogenases/reductases (SDR) family. In terms of assembly, homodimer.

It carries out the reaction a primary alcohol + NAD(+) = an aldehyde + NADH + H(+). The enzyme catalyses a secondary alcohol + NAD(+) = a ketone + NADH + H(+). This chain is Alcohol dehydrogenase (Adh), found in Drosophila nigra (Fruit fly).